Consider the following 268-residue polypeptide: Tryptophan synthase alpha chain (268 aa).

Active-site proton acceptor residues include Glu49 and Asp60.

Belongs to the TrpA family. As to quaternary structure, tetramer of two alpha and two beta chains.

It catalyses the reaction (1S,2R)-1-C-(indol-3-yl)glycerol 3-phosphate + L-serine = D-glyceraldehyde 3-phosphate + L-tryptophan + H2O. It participates in amino-acid biosynthesis; L-tryptophan biosynthesis; L-tryptophan from chorismate: step 5/5. Functionally, the alpha subunit is responsible for the aldol cleavage of indoleglycerol phosphate to indole and glyceraldehyde 3-phosphate. The sequence is that of Tryptophan synthase alpha chain from Shigella dysenteriae serotype 1 (strain Sd197).